Reading from the N-terminus, the 1284-residue chain is Peroxisomal ATPase PEX1 (1284 aa).

The interval 339 to 373 (SPKQQQDKSKQGVLLPDKEKQLSKSPDHKQISSNR) is disordered. The span at 343–373 (QQDKSKQGVLLPDKEKQLSKSPDHKQISSNR) shows a compositional bias: basic and acidic residues. Residues 600-607 (GGKGSGKS) and 882-889 (GPPGTGKT) each bind ATP. A phosphoserine mark is found at serine 1182, serine 1210, and serine 1212. Residues 1261–1284 (FQNPKKRKNQSGTVFRTGQKVTLA) form a disordered region. Residues 1270–1284 (QSGTVFRTGQKVTLA) are compositionally biased toward polar residues.

This sequence belongs to the AAA ATPase family. In terms of assembly, homooligomer; homooligomerizes in the cytosol, interaction with PEX6 promotes dissociation of the homooligomer. Interacts with PEX6; forming the PEX1-PEX6 AAA ATPase complex, which is composed of a heterohexamer formed by a trimer of PEX1-PEX6 dimers. Interacts indirectly with PEX26, via its interaction with PEX6.

Its subcellular location is the cytoplasm. It is found in the cytosol. The protein resides in the peroxisome membrane. It carries out the reaction ATP + H2O = ADP + phosphate + H(+). Its function is as follows. Component of the PEX1-PEX6 AAA ATPase complex, a protein dislocase complex that mediates the ATP-dependent extraction of the PEX5 receptor from peroxisomal membranes, an essential step for PEX5 recycling. Specifically recognizes PEX5 monoubiquitinated at 'Cys-11', and pulls it out of the peroxisome lumen through the PEX2-PEX10-PEX12 retrotranslocation channel. Extraction by the PEX1-PEX6 AAA ATPase complex is accompanied by unfolding of the TPR repeats and release of bound cargo from PEX5. This is Peroxisomal ATPase PEX1 from Mus musculus (Mouse).